The following is a 356-amino-acid chain: S-adenosylmethionine:tRNA ribosyltransferase-isomerase (356 aa).

It belongs to the QueA family. In terms of assembly, monomer.

The protein localises to the cytoplasm. It carries out the reaction 7-aminomethyl-7-carbaguanosine(34) in tRNA + S-adenosyl-L-methionine = epoxyqueuosine(34) in tRNA + adenine + L-methionine + 2 H(+). Its pathway is tRNA modification; tRNA-queuosine biosynthesis. Its function is as follows. Transfers and isomerizes the ribose moiety from AdoMet to the 7-aminomethyl group of 7-deazaguanine (preQ1-tRNA) to give epoxyqueuosine (oQ-tRNA). The chain is S-adenosylmethionine:tRNA ribosyltransferase-isomerase from Enterobacter sp. (strain 638).